The chain runs to 162 residues: Phosphopantetheine adenylyltransferase (162 aa).

Threonine 10 contacts substrate. ATP contacts are provided by residues 10 to 11 and histidine 18; that span reads TF. 3 residues coordinate substrate: lysine 42, leucine 74, and arginine 88. ATP is bound by residues 89 to 91, glutamate 99, and 124 to 130; these read GLR and FSCISST.

This sequence belongs to the bacterial CoaD family. As to quaternary structure, homohexamer. Requires Mg(2+) as cofactor.

Its subcellular location is the cytoplasm. The catalysed reaction is (R)-4'-phosphopantetheine + ATP + H(+) = 3'-dephospho-CoA + diphosphate. It functions in the pathway cofactor biosynthesis; coenzyme A biosynthesis; CoA from (R)-pantothenate: step 4/5. In terms of biological role, reversibly transfers an adenylyl group from ATP to 4'-phosphopantetheine, yielding dephospho-CoA (dPCoA) and pyrophosphate. This chain is Phosphopantetheine adenylyltransferase, found in Francisella philomiragia subsp. philomiragia (strain ATCC 25017 / CCUG 19701 / FSC 153 / O#319-036).